Here is a 348-residue protein sequence, read N- to C-terminus: 4-hydroxy-2-oxovalerate aldolase (348 aa).

In terms of domain architecture, Pyruvate carboxyltransferase spans 9-261; that stretch reads ITVHDMTLRD…RTGVDVWKIQ (253 aa). Substrate is bound at residue 17–18; that stretch reads RD. Asp-18 serves as a coordination point for Mn(2+). Residue His-21 is the Proton acceptor of the active site. Residues Ser-171 and His-200 each coordinate substrate. 2 residues coordinate Mn(2+): His-200 and His-202. Tyr-291 is a substrate binding site.

This sequence belongs to the 4-hydroxy-2-oxovalerate aldolase family.

The enzyme catalyses (S)-4-hydroxy-2-oxopentanoate = acetaldehyde + pyruvate. The protein is 4-hydroxy-2-oxovalerate aldolase of Ralstonia pickettii (strain 12J).